The following is a 504-amino-acid chain: ATP synthase subunit alpha, chloroplastic (504 aa).

Residue 170 to 177 (GDRQTGKT) participates in ATP binding.

It belongs to the ATPase alpha/beta chains family. In terms of assembly, F-type ATPases have 2 components, CF(1) - the catalytic core - and CF(0) - the membrane proton channel. CF(1) has five subunits: alpha(3), beta(3), gamma(1), delta(1), epsilon(1). CF(0) has four main subunits: a, b, b' and c.

It localises to the plastid. The protein localises to the chloroplast thylakoid membrane. It carries out the reaction ATP + H2O + 4 H(+)(in) = ADP + phosphate + 5 H(+)(out). Functionally, produces ATP from ADP in the presence of a proton gradient across the membrane. The alpha chain is a regulatory subunit. In Triticum aestivum (Wheat), this protein is ATP synthase subunit alpha, chloroplastic.